Here is a 372-residue protein sequence, read N- to C-terminus: Homoserine dehydrogenase (372 aa).

4 residues coordinate NAD(+): valine 13, glycine 15, valine 16, and threonine 99. Residues valine 16 and threonine 99 each contribute to the NADP(+) site. 4 residues coordinate NADPH: valine 16, threonine 99, serine 100, and lysine 123. Position 123 (lysine 123) interacts with NADP(+). Positions 150, 153, 155, and 157 each coordinate Na(+). NADP(+) contacts are provided by glycine 216 and glutamate 219. Residues glutamate 219 and aspartate 230 each coordinate L-homoserine. Lysine 234 acts as the Proton donor in catalysis. Glycine 352 contributes to the NAD(+) binding site. Residue glycine 352 participates in NADP(+) binding. Glycine 352 contacts NADPH.

The protein belongs to the homoserine dehydrogenase family. As to quaternary structure, homodimer. A metal cation serves as cofactor.

It catalyses the reaction L-homoserine + NADP(+) = L-aspartate 4-semialdehyde + NADPH + H(+). The enzyme catalyses L-homoserine + NAD(+) = L-aspartate 4-semialdehyde + NADH + H(+). The protein operates within amino-acid biosynthesis; L-methionine biosynthesis via de novo pathway; L-homoserine from L-aspartate: step 3/3. It participates in amino-acid biosynthesis; L-threonine biosynthesis; L-threonine from L-aspartate: step 3/5. Functionally, catalyzes the conversion of L-aspartate-beta-semialdehyde (L-Asa) to L-homoserine (L-Hse), the third step in the biosynthesis of amino acids that derive from aspartate (the aspartate family of amino acids), including methioinine and threonine, the latter of which is a precursor to isoleucine; production of homoserine leads to a branch-point in the pathway as it can either be O-phosphorylated for processing to threonine, or O-acylated for processing to methionine. The protein is Homoserine dehydrogenase of Paracoccidioides brasiliensis (strain Pb18).